The primary structure comprises 315 residues: MYQPSRGAARRLGPCLRAYQARPQDQSSPWALPFPPLWPHSTTTTSPSLPLFWSPPPPSPPTRLLPPAPPLPLPQVQALTSPWVVLPPGKGEEGPGPELLSGCLDGLRSLFEGPPCPCPGALIPFQAPGTAHPSPATPSGDPSMEEHLAVMYERLRQELPNLFLHSHDYTLYSSDVEFINEILNMRTKGRTWYILSLTLCRFLAWNYFAQLRLEILQLTRHPENWTLQARWRLVGLPIHLLFLRFYKRDKEELYRTYDAYSTFYLNSNGLICRHRLDKLMPSHSPPEPVKKLLVGALVALGLSEPEPNLHLCSKD.

This is an uncharacterized protein from Bos taurus (Bovine).